Here is a 1552-residue protein sequence, read N- to C-terminus: Nonribosomal peptide synthetase acrB (1552 aa).

A condensation region spans residues Ala-129–Glu-564. Residues Arg-594–Ile-999 are adenylation. A Carrier domain is found at Ala-1110–Glu-1186. Position 1146 is an O-(pantetheine 4'-phosphoryl)serine (Ser-1146). The thiolester reductase (R) domain stretch occupies residues Leu-1226–Ser-1464.

Belongs to the NRP synthetase family.

It functions in the pathway secondary metabolite biosynthesis. In terms of biological role, nonribosomal peptide synthetase; part of the cluster that mediates the biosynthesis of acurin A, a highly reduced polyketide coupled to a serine via a peptide bond. The activities of the highly reducing polyketide synthase acrA and the nonribosomal peptide synthetase acrB are collectively responsible for the synthesis of the acurin A core structure with a heptaketide backbone produced by acrA covalently fused to a L-serine by acrB. After the formation of the PK-NRP hybrid product, it is detached from acrB by reductive release to set up the formation of the lactam ring by aldol condensation. The hydrolyase acrC then catalyzes water loss to generate a double bond in the ring. This double bond is probably reduced, which is followed by three oxidations at C-22 to generate the carboxylic acid moiety, involving probably the FAD-binding monooxygenase acrE and the cytochrome P450 monooxygenases acrD and acrF. Finally, a last methylation step performed by the O-methyltransferase acrG leads to the production of acurin A. The sequence is that of Nonribosomal peptide synthetase acrB from Aspergillus aculeatus (strain ATCC 16872 / CBS 172.66 / WB 5094).